A 546-amino-acid chain; its full sequence is Chaperonin GroEL 3 (546 aa).

ATP is bound by residues 30–33 (TLGP), Lys-51, 87–91 (DGTTT), Gly-415, and Asp-496.

This sequence belongs to the chaperonin (HSP60) family. In terms of assembly, forms a cylinder of 14 subunits composed of two heptameric rings stacked back-to-back. Interacts with the co-chaperonin GroES.

The protein resides in the cytoplasm. It catalyses the reaction ATP + H2O + a folded polypeptide = ADP + phosphate + an unfolded polypeptide.. Its function is as follows. Together with its co-chaperonin GroES, plays an essential role in assisting protein folding. The GroEL-GroES system forms a nano-cage that allows encapsulation of the non-native substrate proteins and provides a physical environment optimized to promote and accelerate protein folding. The chain is Chaperonin GroEL 3 from Bradyrhizobium diazoefficiens (strain JCM 10833 / BCRC 13528 / IAM 13628 / NBRC 14792 / USDA 110).